Reading from the N-terminus, the 86-residue chain is Large ribosomal subunit protein bL27 (86 aa).

The segment at 1 to 26 (MATKKAGGSSRNGRDSAGRRLGIKKS) is disordered.

This sequence belongs to the bacterial ribosomal protein bL27 family.

The protein is Large ribosomal subunit protein bL27 of Rickettsia typhi (strain ATCC VR-144 / Wilmington).